Here is a 135-residue protein sequence, read N- to C-terminus: Holo-[acyl-carrier-protein] synthase (135 aa).

Mg(2+) is bound by residues aspartate 7 and glutamate 57.

It belongs to the P-Pant transferase superfamily. AcpS family. The cofactor is Mg(2+).

The protein resides in the cytoplasm. The enzyme catalyses apo-[ACP] + CoA = holo-[ACP] + adenosine 3',5'-bisphosphate + H(+). In terms of biological role, transfers the 4'-phosphopantetheine moiety from coenzyme A to a Ser of acyl-carrier-protein. The sequence is that of Holo-[acyl-carrier-protein] synthase from Corynebacterium glutamicum (strain ATCC 13032 / DSM 20300 / JCM 1318 / BCRC 11384 / CCUG 27702 / LMG 3730 / NBRC 12168 / NCIMB 10025 / NRRL B-2784 / 534).